We begin with the raw amino-acid sequence, 87 residues long: uncharacterized protein (87 aa).

A signal peptide spans 1 to 23 (MAVSVLRLTVVLGLLVLFLTCYA). Positions 24–44 (DDKPDKPDDKPDDSGKDPKPD) are disordered.

Its subcellular location is the secreted. This is an uncharacterized protein from Homo sapiens (Human).